A 362-amino-acid polypeptide reads, in one-letter code: D-alanine--D-alanine ligase (362 aa).

Residues 153 to 357 (KKIAREAGIP…YADLLTTLVS (205 aa)) form the ATP-grasp domain. 180 to 235 (RELLGLPVFVKPARGGSSIGISKVDSWRDLPAAIEEAASHDPKVIIEAMITGPEVE) is an ATP binding site. Residues Asp-312, Glu-324, and Asn-326 each contribute to the Mg(2+) site.

The protein belongs to the D-alanine--D-alanine ligase family. The cofactor is Mg(2+). Requires Mn(2+) as cofactor.

It is found in the cytoplasm. The enzyme catalyses 2 D-alanine + ATP = D-alanyl-D-alanine + ADP + phosphate + H(+). It participates in cell wall biogenesis; peptidoglycan biosynthesis. Its function is as follows. Cell wall formation. This chain is D-alanine--D-alanine ligase, found in Corynebacterium urealyticum (strain ATCC 43042 / DSM 7109).